Consider the following 220-residue polypeptide: Casparian strip membrane protein 4 (220 aa).

Residues 1 to 39 form a disordered region; that stretch reads MDSRREVEESSTAPILESKRTRSNGKGKSIDGDHSPPHA. Residues 1–60 lie on the Cytoplasmic side of the membrane; it reads MDSRREVEESSTAPILESKRTRSNGKGKSIDGDHSPPHAATVVTTKATPLQKGGMKKGIA. Residues 61–81 traverse the membrane as a helical segment; sequence ILDFILRLGAIGAALGAAVIM. Residues 82–108 are Extracellular-facing; sequence GTNEQILPFFTQFLQFHAQWDDFPMFK. Residues 109-129 form a helical membrane-spanning segment; it reads FFVVANGAAAGFLILSLPFSI. Residues 130-141 lie on the Cytoplasmic side of the membrane; that stretch reads VCIVRPLAAGPR. The chain crosses the membrane as a helical span at residues 142–162; it reads FLLVIVDLVLMALVVAAASSA. Residues 163–194 are Extracellular-facing; the sequence is AAVVYLAHNGSQDANWNAICQQFTDFCQGSSL. Residue N171 is glycosylated (N-linked (GlcNAc...) asparagine). A helical transmembrane segment spans residues 195 to 215; that stretch reads AVVASFVASVFLACLVVVSSV. Topologically, residues 216–220 are cytoplasmic; the sequence is ALKRT.

Belongs to the Casparian strip membrane proteins (CASP) family. Homodimer and heterodimers.

Its subcellular location is the cell membrane. Its function is as follows. Regulates membrane-cell wall junctions and localized cell wall deposition. Required for establishment of the Casparian strip membrane domain (CSD) and the subsequent formation of Casparian strips, a cell wall modification of the root endodermis that determines an apoplastic barrier between the intraorganismal apoplasm and the extraorganismal apoplasm and prevents lateral diffusion. This Medicago truncatula (Barrel medic) protein is Casparian strip membrane protein 4.